Here is a 476-residue protein sequence, read N- to C-terminus: Protein transport protein Sec61 subunit alpha-like 1 (476 aa).

The Cytoplasmic portion of the chain corresponds to 2-33 (AIKFLEVIKPFCAVLPEIQKPERKIQFREKVL). The helical transmembrane segment at 34 to 53 (WTAITLFIFLVCCQIPLFGI) threads the bilayer. At 54–76 (MSSDSADPFYWMRVILASNRGTL) the chain is on the lumenal side. Residues 77-96 (MELGISPIVTSGLIMQLLAG) traverse the membrane as a helical segment. Over 97 to 117 (AKIIEVGDTPKDRALFNGAQK) the chain is Cytoplasmic. The helical transmembrane segment at 118–138 (LFGMIITIGQAIVYVMTGMYG) threads the bilayer. Residues 139–144 (DPSEMG) lie on the Lumenal side of the membrane. The helical transmembrane segment at 145–165 (AGICLLIIIQLFVAGLIVLLL) threads the bilayer. The Cytoplasmic portion of the chain corresponds to 166–172 (DELLQKG). The chain crosses the membrane as a helical span at residues 173 to 193 (YGLGSGISLFIATNICETIVW). The Lumenal segment spans residues 194–240 (KAFSPTTVNTGRGTEFEGAIIALFHLLATRTDKVRALREAFYRQNLP). Residues 241–261 (NLMNLIATVFVFAVVIYFQGF) form a helical membrane-spanning segment. At 262–288 (RVDLPIKSARYRGQYNTYPIKLFYTSN) the chain is on the cytoplasmic side. Residues 289 to 309 (IPIILQSALVSNLYVISQMLS) form a helical membrane-spanning segment. Residues 310 to 354 (TRFSGNFLVNLLGTWSDTSSGGPARAYPVGGLCYYLSPPESFGSV) lie on the Lumenal side of the membrane. The chain crosses the membrane as a helical span at residues 355 to 375 (LDDPVHAVIYIVFMLGSCAFF). Topologically, residues 376 to 420 (SKTWIEVSGSSAKDVAKQLKEQQMVMRGHRETSMVHELNRYIPTA) are cytoplasmic. Residues 421 to 441 (AAFGGLCIGGLSVMADFLGAI) traverse the membrane as a helical segment. Over 442–445 (GSGT) the chain is Lumenal. Residues 446–462 (GILLAVTIIYQYFEIFV) traverse the membrane as a helical segment. At 463–476 (KEQSEVGSMGALLF) the chain is on the cytoplasmic side.

Belongs to the SecY/SEC61-alpha family. In terms of assembly, the SEC61 channel-forming translocon complex consists of channel-forming core components SEC61A1, SEC61B and SEC61G and different auxiliary components such as SEC62 and SEC63. The SEC61 channel associates with the multi-pass translocon (MPT) complex.

Its subcellular location is the endoplasmic reticulum membrane. Its function is as follows. Component of SEC61 channel-forming translocon complex that mediates transport of signal peptide-containing precursor polypeptides across the endoplasmic reticulum (ER). Forms a ribosome receptor and a gated pore in the ER membrane, both functions required for cotranslational translocation of nascent polypeptides. May cooperate with auxiliary protein SEC62, SEC63 and HSPA5/BiP to enable post-translational transport of small presecretory proteins. The SEC61 channel is also involved in ER membrane insertion of transmembrane proteins: it mediates membrane insertion of the first few transmembrane segments of proteins, while insertion of subsequent transmembrane regions of multi-pass membrane proteins is mediated by the multi-pass translocon (MPT) complex. Plays a role in the pronephric kidney tubule development. This chain is Protein transport protein Sec61 subunit alpha-like 1 (sec61al1), found in Danio rerio (Zebrafish).